Here is a 24-residue protein sequence, read N- to C-terminus: Humanin-like 11 (24 aa).

Belongs to the humanin family.

The protein localises to the secreted. It localises to the cytoplasm. In terms of biological role, plays a role as a neuroprotective and antiapoptotic factor. This Homo sapiens (Human) protein is Humanin-like 11.